A 456-amino-acid polypeptide reads, in one-letter code: Putative dihydroorotase (456 aa).

This sequence belongs to the metallo-dependent hydrolases superfamily. DHOase family. Class I DHOase subfamily.

The catalysed reaction is (S)-dihydroorotate + H2O = N-carbamoyl-L-aspartate + H(+). It functions in the pathway pyrimidine metabolism; UMP biosynthesis via de novo pathway; (S)-dihydroorotate from bicarbonate: step 3/3. Its function is as follows. Catalyzes the reversible cyclization of carbamoyl aspartate to dihydroorotate. The protein is Putative dihydroorotase of Rhodopirellula baltica (strain DSM 10527 / NCIMB 13988 / SH1).